A 303-amino-acid polypeptide reads, in one-letter code: Phosphate import ATP-binding protein PstB (303 aa).

Residues 56–298 form the ABC transporter domain; that stretch reads LSTSDVHVYY…PDHQLTEAYI (243 aa). Residue 88 to 95 participates in ATP binding; the sequence is GPSGCGKS.

This sequence belongs to the ABC transporter superfamily. Phosphate importer (TC 3.A.1.7) family. The complex is composed of two ATP-binding proteins (PstB), two transmembrane proteins (PstC and PstA) and a solute-binding protein (PstS).

The protein localises to the cell inner membrane. It carries out the reaction phosphate(out) + ATP + H2O = ADP + 2 phosphate(in) + H(+). Its function is as follows. Part of the ABC transporter complex PstSACB involved in phosphate import. Responsible for energy coupling to the transport system. The sequence is that of Phosphate import ATP-binding protein PstB from Acinetobacter baylyi (strain ATCC 33305 / BD413 / ADP1).